The following is a 190-amino-acid chain: MIGKLTGTLLEKNPPEVLVDCHGVGYEVLVSMSTFYNLPAVGERVSLLTQFIVREDAQLLYGFGTAQERQAFRELIKISGVGPRTALSILSGMGVADLAQAVSLQEAGRLVKVPGIGKKTAERLLLELKGKLGADVGVRAHAANDNQADILQALLALGYNDKEAAAALKALPADVGVSEGIKLALKSLSK.

The tract at residues 1-64 (MIGKLTGTLL…EDAQLLYGFG (64 aa)) is domain I. The domain II stretch occupies residues 65–137 (TAQERQAFRE…LKGKLGADVG (73 aa)). Residues 137–141 (GVRAH) are flexible linker. The tract at residues 142 to 190 (AANDNQADILQALLALGYNDKEAAAALKALPADVGVSEGIKLALKSLSK) is domain III.

Belongs to the RuvA family. Homotetramer. Forms an RuvA(8)-RuvB(12)-Holliday junction (HJ) complex. HJ DNA is sandwiched between 2 RuvA tetramers; dsDNA enters through RuvA and exits via RuvB. An RuvB hexamer assembles on each DNA strand where it exits the tetramer. Each RuvB hexamer is contacted by two RuvA subunits (via domain III) on 2 adjacent RuvB subunits; this complex drives branch migration. In the full resolvosome a probable DNA-RuvA(4)-RuvB(12)-RuvC(2) complex forms which resolves the HJ.

The protein localises to the cytoplasm. Functionally, the RuvA-RuvB-RuvC complex processes Holliday junction (HJ) DNA during genetic recombination and DNA repair, while the RuvA-RuvB complex plays an important role in the rescue of blocked DNA replication forks via replication fork reversal (RFR). RuvA specifically binds to HJ cruciform DNA, conferring on it an open structure. The RuvB hexamer acts as an ATP-dependent pump, pulling dsDNA into and through the RuvAB complex. HJ branch migration allows RuvC to scan DNA until it finds its consensus sequence, where it cleaves and resolves the cruciform DNA. The polypeptide is Holliday junction branch migration complex subunit RuvA (Acidovorax ebreus (strain TPSY) (Diaphorobacter sp. (strain TPSY))).